The chain runs to 424 residues: Serine hydroxymethyltransferase 2 (424 aa).

(6S)-5,6,7,8-tetrahydrofolate-binding positions include L125 and 129–131; that span reads GHL. Residue K234 is modified to N6-(pyridoxal phosphate)lysine. Residue E250 coordinates (6S)-5,6,7,8-tetrahydrofolate.

The protein belongs to the SHMT family. In terms of assembly, homodimer. Requires pyridoxal 5'-phosphate as cofactor.

It is found in the cytoplasm. It carries out the reaction (6R)-5,10-methylene-5,6,7,8-tetrahydrofolate + glycine + H2O = (6S)-5,6,7,8-tetrahydrofolate + L-serine. Its pathway is one-carbon metabolism; tetrahydrofolate interconversion. It participates in amino-acid biosynthesis; glycine biosynthesis; glycine from L-serine: step 1/1. Catalyzes the reversible interconversion of serine and glycine with tetrahydrofolate (THF) serving as the one-carbon carrier. This reaction serves as the major source of one-carbon groups required for the biosynthesis of purines, thymidylate, methionine, and other important biomolecules. Also exhibits THF-independent aldolase activity toward beta-hydroxyamino acids, producing glycine and aldehydes, via a retro-aldol mechanism. The sequence is that of Serine hydroxymethyltransferase 2 from Burkholderia pseudomallei (strain 1710b).